We begin with the raw amino-acid sequence, 318 residues long: Glutathione synthetase (318 aa).

The ATP-grasp domain occupies K129–E314. ATP is bound at residue H155 to G211. Mg(2+) contacts are provided by E285 and N287.

Belongs to the prokaryotic GSH synthase family. Requires Mg(2+) as cofactor. It depends on Mn(2+) as a cofactor.

It catalyses the reaction gamma-L-glutamyl-L-cysteine + glycine + ATP = glutathione + ADP + phosphate + H(+). It participates in sulfur metabolism; glutathione biosynthesis; glutathione from L-cysteine and L-glutamate: step 2/2. This Bordetella pertussis (strain Tohama I / ATCC BAA-589 / NCTC 13251) protein is Glutathione synthetase.